The sequence spans 339 residues: Glycerol-3-phosphate dehydrogenase [NAD(P)+] (339 aa).

NADPH is bound by residues Ser-13, Trp-14, and Lys-108. Positions 108, 139, and 141 each coordinate sn-glycerol 3-phosphate. Residue Ala-143 coordinates NADPH. Lys-194, Asp-247, Ser-257, Arg-258, and Asn-259 together coordinate sn-glycerol 3-phosphate. Residue Lys-194 is the Proton acceptor of the active site. Position 258 (Arg-258) interacts with NADPH. NADPH-binding residues include Val-282 and Glu-284.

It belongs to the NAD-dependent glycerol-3-phosphate dehydrogenase family.

It is found in the cytoplasm. It carries out the reaction sn-glycerol 3-phosphate + NAD(+) = dihydroxyacetone phosphate + NADH + H(+). The enzyme catalyses sn-glycerol 3-phosphate + NADP(+) = dihydroxyacetone phosphate + NADPH + H(+). The protein operates within membrane lipid metabolism; glycerophospholipid metabolism. In terms of biological role, catalyzes the reduction of the glycolytic intermediate dihydroxyacetone phosphate (DHAP) to sn-glycerol 3-phosphate (G3P), the key precursor for phospholipid synthesis. This Streptococcus equi subsp. equi (strain 4047) protein is Glycerol-3-phosphate dehydrogenase [NAD(P)+].